The primary structure comprises 249 residues: ATP synthase subunit a, chloroplastic (249 aa).

The next 5 membrane-spanning stretches (helical) occupy residues 40–60 (QVLI…VLVV), 97–117 (VPFI…GALL), 136–156 (INTT…AGLS), 201–221 (LVVV…VMFL), and 222–242 (GLFT…AYIG).

Belongs to the ATPase A chain family. F-type ATPases have 2 components, CF(1) - the catalytic core - and CF(0) - the membrane proton channel. CF(1) has five subunits: alpha(3), beta(3), gamma(1), delta(1), epsilon(1). CF(0) has four main subunits: a, b, b' and c.

The protein localises to the plastid. Its subcellular location is the chloroplast thylakoid membrane. Its function is as follows. Key component of the proton channel; it plays a direct role in the translocation of protons across the membrane. In Aethionema grandiflorum (Persian stone-cress), this protein is ATP synthase subunit a, chloroplastic.